The sequence spans 269 residues: Energy-coupling factor transporter ATP-binding protein EcfA1 (269 aa).

The 235-residue stretch at Ile-8–Asp-242 folds into the ABC transporter domain. Gly-42–Ser-49 serves as a coordination point for ATP.

This sequence belongs to the ABC transporter superfamily. Energy-coupling factor EcfA family. As to quaternary structure, forms a stable energy-coupling factor (ECF) transporter complex composed of 2 membrane-embedded substrate-binding proteins (S component), 2 ATP-binding proteins (A component) and 2 transmembrane proteins (T component).

The protein resides in the cell membrane. Its function is as follows. ATP-binding (A) component of a common energy-coupling factor (ECF) ABC-transporter complex. Unlike classic ABC transporters this ECF transporter provides the energy necessary to transport a number of different substrates. This Staphylococcus aureus (strain Mu50 / ATCC 700699) protein is Energy-coupling factor transporter ATP-binding protein EcfA1.